The chain runs to 231 residues: Large ribosomal subunit protein uL1 (231 aa).

Belongs to the universal ribosomal protein uL1 family. As to quaternary structure, part of the 50S ribosomal subunit.

Its function is as follows. Binds directly to 23S rRNA. The L1 stalk is quite mobile in the ribosome, and is involved in E site tRNA release. Functionally, protein L1 is also a translational repressor protein, it controls the translation of the L11 operon by binding to its mRNA. The sequence is that of Large ribosomal subunit protein uL1 from Ralstonia pickettii (strain 12J).